Reading from the N-terminus, the 287-residue chain is Protease HtpX (287 aa).

Transmembrane regions (helical) follow at residues 4 to 24 (VLLF…VFNI) and 37 to 57 (VGLL…SLWI). His-143 contacts Zn(2+). Glu-144 is a catalytic residue. His-147 is a binding site for Zn(2+). 2 consecutive transmembrane segments (helical) span residues 158–178 (LIQG…ASAI) and 194–214 (GVVM…VMWF). Glu-219 serves as a coordination point for Zn(2+).

Belongs to the peptidase M48B family. The cofactor is Zn(2+).

The protein resides in the cell inner membrane. This Idiomarina loihiensis (strain ATCC BAA-735 / DSM 15497 / L2-TR) protein is Protease HtpX.